Here is a 491-residue protein sequence, read N- to C-terminus: Malonate-semialdehyde dehydrogenase 1 (491 aa).

Ala154, Phe156, Lys180, Glu183, Arg184, Ser233, and Thr255 together coordinate NAD(+). The Nucleophile role is filled by Cys288. An NAD(+)-binding site is contributed by Glu386.

The protein belongs to the aldehyde dehydrogenase family. IolA subfamily. In terms of assembly, homotetramer.

The catalysed reaction is 3-oxopropanoate + NAD(+) + CoA + H2O = hydrogencarbonate + acetyl-CoA + NADH + H(+). It carries out the reaction 2-methyl-3-oxopropanoate + NAD(+) + CoA + H2O = propanoyl-CoA + hydrogencarbonate + NADH + H(+). The protein operates within polyol metabolism; myo-inositol degradation into acetyl-CoA; acetyl-CoA from myo-inositol: step 7/7. Functionally, catalyzes the oxidation of malonate semialdehyde (MSA) and methylmalonate semialdehyde (MMSA) into acetyl-CoA and propanoyl-CoA, respectively. Is involved in a myo-inositol catabolic pathway. Bicarbonate, and not CO2, is the end-product of the enzymatic reaction. This chain is Malonate-semialdehyde dehydrogenase 1, found in Shouchella clausii (strain KSM-K16) (Alkalihalobacillus clausii).